Reading from the N-terminus, the 690-residue chain is Heterogeneous nuclear ribonucleoprotein M (690 aa).

Positions 1–13 (MAAGVEAAAEVAA) are enriched in low complexity. The segment at 1–63 (MAAGVEAAAE…KRGGNRFEPY (63 aa)) is disordered. Alanine 2 carries the post-translational modification N-acetylalanine. Lysine 17 participates in a covalent cross-link: Glycyl lysine isopeptide (Lys-Gly) (interchain with G-Cter in SUMO2). Serine 29 bears the Phosphoserine mark. Glycyl lysine isopeptide (Lys-Gly) (interchain with G-Cter in SUMO2) cross-links involve residues lysine 37, lysine 68, and lysine 82. A compositionally biased stretch (basic and acidic residues) spans 37–49 (KGEERPTQNEKRK). 2 consecutive RRM domains span residues 70–148 (YRAF…EDPD) and 164–241 (STVF…MDER). The residue at position 85 (serine 85) is a Phosphoserine. Glycyl lysine isopeptide (Lys-Gly) (interchain with G-Cter in SUMO2) cross-links involve residues lysine 87 and lysine 126. Lysine 133 is modified (N6-acetyllysine; alternate). A Glycyl lysine isopeptide (Lys-Gly) (interchain with G-Cter in SUMO2); alternate cross-link involves residue lysine 133. Glycyl lysine isopeptide (Lys-Gly) (interchain with G-Cter in SUMO2) cross-links involve residues lysine 142 and lysine 144. Position 164 is a phosphoserine (serine 164). Lysine 181 participates in a covalent cross-link: Glycyl lysine isopeptide (Lys-Gly) (interchain with G-Cter in SUMO2). At lysine 237 the chain carries N6-acetyllysine; alternate. A Glycyl lysine isopeptide (Lys-Gly) (interchain with G-Cter in SUMO2); alternate cross-link involves residue lysine 237. Residues lysine 245 and lysine 305 each participate in a glycyl lysine isopeptide (Lys-Gly) (interchain with G-Cter in SUMO2) cross-link. A phosphoserine mark is found at serine 325 and serine 337. Glycyl lysine isopeptide (Lys-Gly) (interchain with G-Cter in SUMO2) cross-links involve residues lysine 341 and lysine 348. Serine 357 carries the post-translational modification Phosphoserine. A run of 4 repeats spans residues 360 to 365 (GIERMG), 367 to 372 (GIDRIS), 375 to 380 (GMERMG), and 386 to 391 (GMDRVG). The segment at 360 to 568 (GIERMGPGID…ALGAGIERMG (209 aa)) is 27 X 6 AA repeats of [GEVSTPAN]-[ILMV]-[DE]-[RH]-[MLVI]-[GAV]. Serine 392 carries the post-translational modification Phosphoserine. 3 consecutive repeat copies span residues 393–398 (EIERMG), 400–405 (VMDRMG), and 406–411 (SVERMG). Serine 412 is subject to Phosphoserine. 4 consecutive repeat copies span residues 413-418 (GIERMG), 421-426 (GLDHMA), 428-433 (SIERMG), and 435-440 (TMERIG). At serine 428 the chain carries Phosphoserine. Phosphoserine is present on serine 441. 16 tandem repeats follow at residues 442 to 447 (GVERMG), 453 to 458 (GLERMA), 460 to 465 (PIDRVG), 467 to 472 (TIERMG), 474 to 479 (GVERMG), 481 to 486 (AIERMG), 488 to 493 (SMDRMV), 500 to 505 (GLERMG), 507 to 512 (VMDRMA), 514 to 519 (GLERMG), 522 to 527 (NLERMG), 528 to 532 (LERMG), 535 to 540 (SLERMG), 541 to 545 (LERMG), 548 to 553 (SLERMG), and 563 to 568 (GIERMG). The residue at position 456 (arginine 456) is an Omega-N-methylarginine. The residue at position 488 (serine 488) is a Phosphoserine. The residue at position 535 (serine 535) is a Phosphoserine. Serine 548 is subject to Phosphoserine. Residues serine 578, serine 593, and serine 597 each carry the phosphoserine modification. Lysine 611 participates in a covalent cross-link: Glycyl lysine isopeptide (Lys-Gly) (interchain with G-Cter in SUMO2). The RRM 3 domain maps to 613 to 689 (CQIFVRNLPF…REIDVRIDRN (77 aa)). Threonine 625 carries the phosphothreonine modification. Lysine 627 participates in a covalent cross-link: Glycyl lysine isopeptide (Lys-Gly) (interchain with G-Cter in SUMO2). Lysine 632 is modified (N6-acetyllysine). Glycyl lysine isopeptide (Lys-Gly) (interchain with G-Cter in SUMO2) cross-links involve residues lysine 645 and lysine 652. Position 658 is an N6-acetyllysine; alternate (lysine 658). A Glycyl lysine isopeptide (Lys-Gly) (interchain with G-Cter in SUMO2); alternate cross-link involves residue lysine 658. Residue lysine 658 forms a Glycyl lysine isopeptide (Lys-Gly) (interchain with G-Cter in SUMO1); alternate linkage. The residue at position 661 (serine 661) is a Phosphoserine. Lysine 676 participates in a covalent cross-link: Glycyl lysine isopeptide (Lys-Gly) (interchain with G-Cter in SUMO2).

In terms of assembly, identified in the spliceosome C complex. Interacts with PPIA/CYPA. In terms of processing, sumoylated. Expressed in all tissues tested, including liver, heart, lung, skeletal muscle, kidney, stomach, large intestine, small intestine, pancreas, spleen, peritoneal macrophage and thyroid.

It is found in the nucleus matrix. Pre-mRNA binding protein, binds avidly to poly(G) and poly(U) RNA homopolymers. Involved in splicing. Acts as a receptor for carcinoembryonic antigen in Kupffer cells, may initiate a series of signaling events leading to tyrosine phosphorylation of proteins and induction of IL-1 alpha, IL-6, IL-10 and tumor necrosis factor alpha cytokines. This chain is Heterogeneous nuclear ribonucleoprotein M (Hnrnpm), found in Rattus norvegicus (Rat).